We begin with the raw amino-acid sequence, 652 residues long: DNA ligase (652 aa).

Residues D29–D33, S78–L79, and E107 contribute to the NAD(+) site. K109 functions as the N6-AMP-lysine intermediate in the catalytic mechanism. The NAD(+) site is built by R130, E164, K278, and K302. Zn(2+) is bound by residues C395, C398, C413, and C418. The region spanning D577 to L652 is the BRCT domain.

Belongs to the NAD-dependent DNA ligase family. LigA subfamily. It depends on Mg(2+) as a cofactor. Requires Mn(2+) as cofactor.

The enzyme catalyses NAD(+) + (deoxyribonucleotide)n-3'-hydroxyl + 5'-phospho-(deoxyribonucleotide)m = (deoxyribonucleotide)n+m + AMP + beta-nicotinamide D-nucleotide.. Functionally, DNA ligase that catalyzes the formation of phosphodiester linkages between 5'-phosphoryl and 3'-hydroxyl groups in double-stranded DNA using NAD as a coenzyme and as the energy source for the reaction. It is essential for DNA replication and repair of damaged DNA. This is DNA ligase from Streptococcus equi subsp. equi (strain 4047).